We begin with the raw amino-acid sequence, 246 residues long: Major pollen allergen Cyn d 1 (246 aa).

N-linked (GlcNAc...) asparagine glycosylation is present at Asn-9. One can recognise an Expansin-like EG45 domain in the interval 39–145 (GGACGYKDVD…RRVKCKYPSG (107 aa)). Positions 159–240 (HYLALLVKYA…NWKPDTVYTS (82 aa)) constitute an Expansin-like CBD domain.

The protein belongs to the expansin family. Expansin B subfamily.

It localises to the secreted. The sequence is that of Major pollen allergen Cyn d 1 (CYND1) from Cynodon dactylon (Bermuda grass).